The primary structure comprises 401 residues: 8-amino-7-oxononanoate synthase (401 aa).

R24 lines the substrate pocket. 111-112 (GF) provides a ligand contact to pyridoxal 5'-phosphate. H137 lines the substrate pocket. Residues S183, H211, and T240 each coordinate pyridoxal 5'-phosphate. Position 243 is an N6-(pyridoxal phosphate)lysine (K243). Substrate is bound at residue T357.

It belongs to the class-II pyridoxal-phosphate-dependent aminotransferase family. BioF subfamily. In terms of assembly, homodimer. Pyridoxal 5'-phosphate serves as cofactor.

It carries out the reaction 6-carboxyhexanoyl-[ACP] + L-alanine + H(+) = (8S)-8-amino-7-oxononanoate + holo-[ACP] + CO2. The protein operates within cofactor biosynthesis; biotin biosynthesis. In terms of biological role, catalyzes the decarboxylative condensation of pimeloyl-[acyl-carrier protein] and L-alanine to produce 8-amino-7-oxononanoate (AON), [acyl-carrier protein], and carbon dioxide. This Xylella fastidiosa (strain M12) protein is 8-amino-7-oxononanoate synthase.